Here is a 251-residue protein sequence, read N- to C-terminus: Phosphoribosylaminoimidazole-succinocarboxamide synthase (251 aa).

This sequence belongs to the SAICAR synthetase family.

The enzyme catalyses 5-amino-1-(5-phospho-D-ribosyl)imidazole-4-carboxylate + L-aspartate + ATP = (2S)-2-[5-amino-1-(5-phospho-beta-D-ribosyl)imidazole-4-carboxamido]succinate + ADP + phosphate + 2 H(+). It functions in the pathway purine metabolism; IMP biosynthesis via de novo pathway; 5-amino-1-(5-phospho-D-ribosyl)imidazole-4-carboxamide from 5-amino-1-(5-phospho-D-ribosyl)imidazole-4-carboxylate: step 1/2. The chain is Phosphoribosylaminoimidazole-succinocarboxamide synthase from Phenylobacterium zucineum (strain HLK1).